The chain runs to 33 residues: U-limacoditoxin(13)-As11 (33 aa).

Positions 1–19 (MFKLLLVLALTMLAQSALA) are cleaved as a signal peptide. A Phenylalanine amide modification is found at F32.

It belongs to the FARP (FMRFamide related peptide) family. As to expression, expressed by the venom secretory cell of the spine. The spine is a cuticular structure containing a single large nucleated venom-secreting cell at its base. It is an independent unit capable of producing, storing and injecting venom. On the back of A.stimulea caterpillars, spines are grouped together by 50 to 100 to form scoli, of which there are eight.

It is found in the secreted. Functionally, is toxic when injected into Drosophila melanogaster. Also shows a low anthelmintic activity against the parasitic nematode H.contortus (drug susceptible Kirby isolate). This is U-limacoditoxin(13)-As11 from Acharia stimulea (Saddleback caterpillar moth).